The following is a 296-amino-acid chain: MLLGSHVSMSGKKMLEGSAIEAYEYGETTFMIYTGAPQNTRRKSIEDLNITKGHEVMEKYGLSNIVVHAPYIINIANTTKPETFNLGVDFLQQEIERTQAIGAKDIVLHPGAHVGAGVDAGINKIIEGLNEVLTNDNNVRIALETMAGKGTEIGRSFEELARIIDGVHNNERLSVCFDTCHTHDAGYNVKEDFDGVLNEFDKIIGVDRIKVVHVNDSKNDRGAQKDRHENIGFGYIGFDALNYIVHHDSFKDIPKILETPYVGEDKKNKKPPYKLEIEMLKQQQFDPELKNKVMQQ.

The Zn(2+) site is built by histidine 68, histidine 109, glutamate 144, aspartate 178, histidine 181, histidine 213, aspartate 226, histidine 228, and glutamate 258.

Belongs to the AP endonuclease 2 family. Zn(2+) serves as cofactor.

The catalysed reaction is Endonucleolytic cleavage to 5'-phosphooligonucleotide end-products.. Endonuclease IV plays a role in DNA repair. It cleaves phosphodiester bonds at apurinic or apyrimidinic (AP) sites, generating a 3'-hydroxyl group and a 5'-terminal sugar phosphate. The protein is Probable endonuclease 4 of Staphylococcus aureus (strain Mu3 / ATCC 700698).